The chain runs to 886 residues: Cadherin-1 (886 aa).

A signal peptide spans 1–23 (MGARCRSFSALLLLLQVSSWLCQ). Residues 24-158 (QPESESDSCR…FHQGLRRQKR (135 aa)) constitute a propeptide that is removed on maturation. Over 24 to 713 (QPESESDSCR…SLEAGLQVPA (690 aa)) the chain is Extracellular. Cadherin domains follow at residues 159-266 (DWVI…RPEF), 267-379 (IQEV…APIF), 380-490 (NPST…APIF), 491-597 (VPAE…DNAP), and 598-701 (IPEP…NCMK). A Ca(2+)-binding site is contributed by D261. Residues S284 and S289 are each glycosylated (O-linked (Man...) serine). D292 contributes to the Ca(2+) binding site. 4 O-linked (Man...) threonine glycosylation sites follow: T362, T474, T476, and T513. N562 is a glycosylation site (N-linked (GlcNAc...) asparagine). 3 O-linked (Man...) threonine glycosylation sites follow: T580, T582, and T584. N641 carries an N-linked (GlcNAc...) asparagine glycan. A helical membrane pass occupies residues 714–734 (ILGILGGILALLILILLLLLF). Over 735-886 (LRRRTVVKEP…ADMYGGGEED (152 aa)) the chain is Cytoplasmic. Residues 751-771 (DTRDNVYYYDEEGGGEEDQDF) form a disordered region. Phosphotyrosine; by SRC is present on residues Y757, Y758, and Y759. Residues 759–771 (YDEEGGGEEDQDF) are compositionally biased toward acidic residues. A required for binding CTNND1 and PSEN1 region spans residues 762 to 773 (EGGGEEDQDFDL). 5 positions are modified to phosphoserine: S774, S797, S842, S844, and S850. The required for binding alpha, beta and stretch occupies residues 815 to 886 (IDENLKAADS…ADMYGGGEED (72 aa)).

Homodimer; disulfide-linked. Component of an E-cadherin/ catenin adhesion complex composed of at least E-cadherin/CDH1, beta-catenin/CTNNB1 or gamma-catenin/JUP, and potentially alpha-catenin/CTNNA1; the complex is located to adherens junctions. Found in a complex composed of CDH1, RAP1A and PKP3; PKP3 acts as a scaffold protein within the complex, the complex is required for CDH1 localization to mature desmosome cell junctions. Interacts with the TRPV4 and CTNNB1 complex. Interacts with CTNND1. The stable association of CTNNA1 is controversial as CTNNA1 was shown not to bind to F-actin when assembled in the complex. Alternatively, the CTNNA1-containing complex may be linked to F-actin by other proteins such as LIMA1. Interaction with PSEN1, cleaves CDH1 resulting in the disassociation of cadherin-based adherens junctions (CAJs). Interacts with AJAP1 and DLGAP5. Interacts with TBC1D2. Interacts with LIMA1. Interacts with CAV1. Interacts with PIP5K1C. Interacts with DDR1; this stabilizes CDH1 at the cell surface and inhibits its internalization. Interacts with RAPGEF2. Interacts with RAB8B. Interacts with KLRG1. Forms a ternary complex composed of ADAM10, CADH1 and EPHA4; within the complex, CADH1 is cleaved by ADAM10 which disrupts adherens junctions. Interacts with SPEF1. Interacts with CTNNB1 and PKP2. Interacts with AMOTL2; the interaction may facilitate binding of radial actin fibers to cell junction complexes. Interacts with DSG3; the interaction is required for CDH1 localization to developing adherens junctions. In terms of processing, during apoptosis or with calcium influx, cleaved by a membrane-bound metalloproteinase (ADAM10), PS1/gamma-secretase and caspase-3. Processing by the metalloproteinase, induced by calcium influx, causes disruption of cell-cell adhesion and the subsequent release of beta-catenin into the cytoplasm. The residual membrane-tethered cleavage product is rapidly degraded via an intracellular proteolytic pathway. Cleavage by caspase-3 releases the cytoplasmic tail resulting in disintegration of the actin microfilament system. The gamma-secretase-mediated cleavage promotes disassembly of adherens junctions. During development of the cochlear organ of Corti, cleavage by ADAM10 at adherens junctions promotes pillar cell separation. N-glycosylation at Asn-641 is essential for expression, folding and trafficking. Addition of bisecting N-acetylglucosamine by MGAT3 modulates its cell membrane location. Post-translationally, ubiquitinated by a SCF complex containing SKP2, which requires prior phosphorylation by CK1/CSNK1A1. Ubiquitinated by CBLL1/HAKAI, requires prior phosphorylation at Tyr-758. In terms of processing, O-glycosylated. O-manosylated by TMTC1, TMTC2, TMTC3 or TMTC4. Ser-289 and Thr-513 are O-manosylated by TMTC2 or TMTC4 but not TMTC1 or TMTC3.

It is found in the cell junction. The protein localises to the adherens junction. It localises to the cell membrane. The protein resides in the endosome. Its subcellular location is the golgi apparatus. It is found in the trans-Golgi network. The protein localises to the cytoplasm. It localises to the desmosome. Functionally, cadherins are calcium-dependent cell adhesion proteins. They preferentially interact with themselves in a homophilic manner in connecting cells; cadherins may thus contribute to the sorting of heterogeneous cell types. CDH1 is involved in mechanisms regulating cell-cell adhesions, mobility and proliferation of epithelial cells. Promotes organization of radial actin fiber structure and cellular response to contractile forces, via its interaction with AMOTL2 which facilitates anchoring of radial actin fibers to CDH1 junction complexes at the cell membrane. Plays a role in the early stages of desmosome cell-cell junction formation via facilitating the recruitment of DSG2 and DSP to desmosome plaques. Has a potent invasive suppressor role. It is a ligand for integrin alpha-E/beta-7. Its function is as follows. E-Cad/CTF2 promotes non-amyloidogenic degradation of Abeta precursors. Has a strong inhibitory effect on APP C99 and C83 production. The chain is Cadherin-1 (Cdh1) from Rattus norvegicus (Rat).